The chain runs to 187 residues: Large ribosomal subunit protein uL6 (187 aa).

It belongs to the universal ribosomal protein uL6 family. Part of the 50S ribosomal subunit.

In terms of biological role, this protein binds to the 23S rRNA, and is important in its secondary structure. It is located near the subunit interface in the base of the L7/L12 stalk, and near the tRNA binding site of the peptidyltransferase center. In Thermosynechococcus vestitus (strain NIES-2133 / IAM M-273 / BP-1), this protein is Large ribosomal subunit protein uL6.